Here is a 65-residue protein sequence, read N- to C-terminus: Small ribosomal subunit protein bS21 (65 aa).

This sequence belongs to the bacterial ribosomal protein bS21 family.

This Geotalea daltonii (strain DSM 22248 / JCM 15807 / FRC-32) (Geobacter daltonii) protein is Small ribosomal subunit protein bS21.